The chain runs to 89 residues: Mitochondrial import inner membrane translocase subunit Tim9 (89 aa).

Position 2 is an N-acetylalanine (Ala-2). The Twin CX3C motif signature appears at 28–52 (CFLDCVKDFTTREVKPEETTCSEHC). 2 cysteine pairs are disulfide-bonded: Cys-28–Cys-52 and Cys-32–Cys-48.

Belongs to the small Tim family. Heterohexamer; composed of 3 copies of TIMM9 and 3 copies of TIMM10/TIM10A, named soluble 70 kDa complex. The complex forms a 6-bladed alpha-propeller structure and associates with the TIMM22 component of the TIM22 complex. Interacts with multi-pass transmembrane proteins in transit. Also forms a complex composed of TIMM9, TIMM10/TIM10A and FXC1/TIM10B. In terms of tissue distribution, ubiquitous, with highest expression in heart, kidney, liver and skeletal muscle.

It localises to the mitochondrion inner membrane. Its function is as follows. Mitochondrial intermembrane chaperone that participates in the import and insertion of multi-pass transmembrane proteins into the mitochondrial inner membrane. May also be required for the transfer of beta-barrel precursors from the TOM complex to the sorting and assembly machinery (SAM complex) of the outer membrane. Acts as a chaperone-like protein that protects the hydrophobic precursors from aggregation and guide them through the mitochondrial intermembrane space. The polypeptide is Mitochondrial import inner membrane translocase subunit Tim9 (TIMM9) (Homo sapiens (Human)).